Reading from the N-terminus, the 174-residue chain is UPF0340 protein SAR2202 (174 aa).

It belongs to the UPF0340 family.

This chain is UPF0340 protein SAR2202, found in Staphylococcus aureus (strain MRSA252).